The primary structure comprises 119 residues: Ribonuclease P protein component (119 aa).

The protein belongs to the RnpA family. Consists of a catalytic RNA component (M1 or rnpB) and a protein subunit.

The catalysed reaction is Endonucleolytic cleavage of RNA, removing 5'-extranucleotides from tRNA precursor.. Functionally, RNaseP catalyzes the removal of the 5'-leader sequence from pre-tRNA to produce the mature 5'-terminus. It can also cleave other RNA substrates such as 4.5S RNA. The protein component plays an auxiliary but essential role in vivo by binding to the 5'-leader sequence and broadening the substrate specificity of the ribozyme. This chain is Ribonuclease P protein component, found in Clostridium acetobutylicum (strain ATCC 824 / DSM 792 / JCM 1419 / IAM 19013 / LMG 5710 / NBRC 13948 / NRRL B-527 / VKM B-1787 / 2291 / W).